The sequence spans 23 residues: Coenzyme PQQ synthesis protein A (23 aa).

Positions 15-19 (EVTMY) form a cross-link, pyrroloquinoline quinone (Glu-Tyr).

It belongs to the PqqA family.

It participates in cofactor biosynthesis; pyrroloquinoline quinone biosynthesis. In terms of biological role, required for coenzyme pyrroloquinoline quinone (PQQ) biosynthesis. PQQ is probably formed by cross-linking a specific glutamate to a specific tyrosine residue and excising these residues from the peptide. The polypeptide is Coenzyme PQQ synthesis protein A (Pseudomonas putida (strain W619)).